Consider the following 116-residue polypeptide: Flagellar transcriptional regulator FlhD (116 aa).

This sequence belongs to the FlhD family. Homodimer; disulfide-linked. Forms a heterohexamer composed of two FlhC and four FlhD subunits. Each FlhC binds a FlhD dimer, forming a heterotrimer, and a hexamer assembles by dimerization of two heterotrimers.

Its subcellular location is the cytoplasm. Functions in complex with FlhC as a master transcriptional regulator that regulates transcription of several flagellar and non-flagellar operons by binding to their promoter region. Activates expression of class 2 flagellar genes, including fliA, which is a flagellum-specific sigma factor that turns on the class 3 genes. Also regulates genes whose products function in a variety of physiological pathways. In Xenorhabdus nematophila (Achromobacter nematophilus), this protein is Flagellar transcriptional regulator FlhD.